Reading from the N-terminus, the 128-residue chain is Small ribosomal subunit protein uS11 (128 aa).

Belongs to the universal ribosomal protein uS11 family. In terms of assembly, part of the 30S ribosomal subunit. Interacts with proteins S7 and S18. Binds to IF-3.

In terms of biological role, located on the platform of the 30S subunit, it bridges several disparate RNA helices of the 16S rRNA. Forms part of the Shine-Dalgarno cleft in the 70S ribosome. This chain is Small ribosomal subunit protein uS11, found in Desulfosudis oleivorans (strain DSM 6200 / JCM 39069 / Hxd3) (Desulfococcus oleovorans).